Here is a 174-residue protein sequence, read N- to C-terminus: Small ribosomal subunit protein uS5 (174 aa).

One can recognise an S5 DRBM domain in the interval 19–82 (LREKMIAVNR…EQARRGMFKV (64 aa)).

It belongs to the universal ribosomal protein uS5 family. In terms of assembly, part of the 30S ribosomal subunit. Contacts proteins S4 and S8.

Functionally, with S4 and S12 plays an important role in translational accuracy. Its function is as follows. Located at the back of the 30S subunit body where it stabilizes the conformation of the head with respect to the body. This chain is Small ribosomal subunit protein uS5, found in Bordetella bronchiseptica (strain ATCC BAA-588 / NCTC 13252 / RB50) (Alcaligenes bronchisepticus).